Consider the following 317-residue polypeptide: uncharacterized protein (317 aa).

The span at 68-78 shows a compositional bias: low complexity; it reads DSTNTDISNET. Residues 68–87 are disordered; it reads DSTNTDISNETPILSNNTPI.

This is an uncharacterized protein from Methanocaldococcus jannaschii (strain ATCC 43067 / DSM 2661 / JAL-1 / JCM 10045 / NBRC 100440) (Methanococcus jannaschii).